Reading from the N-terminus, the 200-residue chain is 5'(3')-deoxyribonucleotidase, cytosolic type (200 aa).

Asp-12 (nucleophile) is an active-site residue. Residues Asp-12 and Asp-14 each contribute to the Mg(2+) site. The active-site Proton donor is Asp-14. The substrate site is built by Phe-20, Phe-46, Tyr-67, and Thr-101. Thr-102 carries the post-translational modification Phosphothreonine. Residue Lys-136 participates in substrate binding. Asp-147 serves as a coordination point for Mg(2+). Ser-184 bears the Phosphoserine mark.

The protein belongs to the 5'(3')-deoxyribonucleotidase family. As to quaternary structure, homodimer. It depends on Mg(2+) as a cofactor.

The protein localises to the cytoplasm. Its function is as follows. Dephosphorylates the 5' and 2'(3')-phosphates of deoxyribonucleotides, with a preference for dUMP and dTMP, intermediate activity towards dGMP, and low activity towards dCMP and dAMP. This Mus musculus (Mouse) protein is 5'(3')-deoxyribonucleotidase, cytosolic type (Nt5c).